Consider the following 83-residue polypeptide: Aspergillic acid biosynthesis cluster protein F (83 aa).

It participates in secondary metabolite biosynthesis. Its function is as follows. Part of the gene cluster that mediates the biosynthesis of aspergillic acid, a hydroxamic acid-containing pyrazinone with aliphatic side chains that originates from leucine (Leu) and isoleucine (Ile). Aspergillic acid has antibiotic properties and was shown to be lethal to mice. The first step in the pathway is the production of deoxyaspergillic acid via a condensation between the Ile amine and the Leu carboxylic acid, followed by a reductive release from the protein forming the dipeptide aldehyde NH(2)-Leu-Ile-CHO, which could undergo an intermolecular cyclization resulting in a dihydropyrazinone. As the NRPS asaC lacks a condensation domain, it is improbable that it is responsible for condensation of Leu and Ile. One possibility is that asaC acts on a previously condensed dipeptide and functions as a Leu-Ile reductase to yield deoxyaspergillic acid. After asaC forms deoxyaspergillic acid, the cytochrome P450 asaD oxidizes the pyrazinone to the hydroxamic acid-containing bioactive metabolite aspergillic acid. The hydroxylase/desaturase asaB can then convert aspergillic acid to hydroxyaspergillic acid. Both aspergillic acid and hydroxyaspergillic acid can form complexes with iron producing ferriaspergillin analogs. This is Aspergillic acid biosynthesis cluster protein F from Aspergillus flavus (strain ATCC 200026 / FGSC A1120 / IAM 13836 / NRRL 3357 / JCM 12722 / SRRC 167).